The primary structure comprises 506 residues: Glutamate--tRNA ligase (506 aa).

A 'HIGH' region motif is present at residues 12–22 (PSPTGDPHVGT). Positions 253 to 257 (KLSKR) match the 'KMSKS' region motif. Lys256 lines the ATP pocket.

It belongs to the class-I aminoacyl-tRNA synthetase family. Glutamate--tRNA ligase type 1 subfamily. As to quaternary structure, monomer.

It is found in the cytoplasm. It carries out the reaction tRNA(Glu) + L-glutamate + ATP = L-glutamyl-tRNA(Glu) + AMP + diphosphate. Catalyzes the attachment of glutamate to tRNA(Glu) in a two-step reaction: glutamate is first activated by ATP to form Glu-AMP and then transferred to the acceptor end of tRNA(Glu). This Chlamydia trachomatis serovar L2 (strain ATCC VR-902B / DSM 19102 / 434/Bu) protein is Glutamate--tRNA ligase.